The primary structure comprises 364 residues: Glycosyltransferase 8 domain-containing protein 1 (364 aa).

The Cytoplasmic portion of the chain corresponds to 1 to 5; the sequence is MRRVH. Residues 6-26 traverse the membrane as a helical; Signal-anchor for type II membrane protein segment; it reads ITVILLAAVIFLLVLHHNILG. The Lumenal segment spans residues 27–364; that stretch reads LSDILKRQNS…QFSLIRRHAE (338 aa). Asn102, Asn247, and Asn255 each carry an N-linked (GlcNAc...) asparagine glycan.

Belongs to the glycosyltransferase 8 family.

It is found in the membrane. The sequence is that of Glycosyltransferase 8 domain-containing protein 1 (glt8d1) from Xenopus laevis (African clawed frog).